The following is a 182-amino-acid chain: ATP-dependent protease subunit HslV (182 aa).

Threonine 7 is a catalytic residue. Alanine 166, cysteine 169, and threonine 172 together coordinate Na(+).

The protein belongs to the peptidase T1B family. HslV subfamily. A double ring-shaped homohexamer of HslV is capped on each side by a ring-shaped HslU homohexamer. The assembly of the HslU/HslV complex is dependent on binding of ATP.

It localises to the cytoplasm. It carries out the reaction ATP-dependent cleavage of peptide bonds with broad specificity.. Its activity is regulated as follows. Allosterically activated by HslU binding. Functionally, protease subunit of a proteasome-like degradation complex believed to be a general protein degrading machinery. The sequence is that of ATP-dependent protease subunit HslV from Albidiferax ferrireducens (strain ATCC BAA-621 / DSM 15236 / T118) (Rhodoferax ferrireducens).